A 460-amino-acid polypeptide reads, in one-letter code: NADH-ubiquinone oxidoreductase chain 4 (460 aa).

13 helical membrane-spanning segments follow: residues 22 to 42, 59 to 79, 94 to 113, 117 to 139, 148 to 168, 195 to 215, 231 to 251, 258 to 278, 286 to 306, 310 to 330, 343 to 362, 394 to 414, and 436 to 456; these read WLWS…LSWF, IDPL…LMIL, RIYI…AFSA, ILFY…RWGN, TYFL…LLFM, FWWT…GVHL, ILAA…IIML, MAYP…SICL, MIAY…LIQT, FAGA…LFCL, LLLA…WWLL, ILLT…MFLM, and LLLT…ELIW.

Belongs to the complex I subunit 4 family.

Its subcellular location is the mitochondrion membrane. It catalyses the reaction a ubiquinone + NADH + 5 H(+)(in) = a ubiquinol + NAD(+) + 4 H(+)(out). In terms of biological role, core subunit of the mitochondrial membrane respiratory chain NADH dehydrogenase (Complex I) that is believed to belong to the minimal assembly required for catalysis. Complex I functions in the transfer of electrons from NADH to the respiratory chain. The immediate electron acceptor for the enzyme is believed to be ubiquinone. The polypeptide is NADH-ubiquinone oxidoreductase chain 4 (MTND4) (Scyliorhinus canicula (Small-spotted catshark)).